Reading from the N-terminus, the 728-residue chain is Polyribonucleotide nucleotidyltransferase (728 aa).

The Mg(2+) site is built by aspartate 487 and aspartate 493. One can recognise a KH domain in the interval 554-613 (PRIEVITVPTDKIREVIGTGGKVIREIVEKTGAKVDISDDGTIKVASSDGESIRKAIAWI). One can recognise an S1 motif domain in the interval 623-691 (GKIYEGTVVK…DRGKVRLSMK (69 aa)). The segment covering 697–707 (TGEEIVYENEP) has biased composition (acidic residues). The segment at 697–728 (TGEEIVYENEPAEQPREKREGGGGRGRRRERD) is disordered. Residues 709–718 (EQPREKREGG) show a composition bias toward basic and acidic residues.

It belongs to the polyribonucleotide nucleotidyltransferase family. Mg(2+) is required as a cofactor.

It is found in the cytoplasm. It catalyses the reaction RNA(n+1) + phosphate = RNA(n) + a ribonucleoside 5'-diphosphate. Involved in mRNA degradation. Catalyzes the phosphorolysis of single-stranded polyribonucleotides processively in the 3'- to 5'-direction. This chain is Polyribonucleotide nucleotidyltransferase, found in Parvibaculum lavamentivorans (strain DS-1 / DSM 13023 / NCIMB 13966).